Here is a 1072-residue protein sequence, read N- to C-terminus: Serine/threonine-protein kinase 11-interacting protein (1072 aa).

LRR repeat units follow at residues 109–130, 132–152, 164–185, 187–209, 210–231, 233–254, 255–276, and 280–301; these read SLRQLELRGVPIHSLCGLRGIY, QLESLVCNRSIQALEELLSAC, ALLSADFSYNALRSLDSSLRLL, ALRFLNLSHNHLQDCKGFLMDLC, ELYHLDISYNHLRLVPRVGPSG, ALGTLILRANELRSLQGLEQLK, NLRHLDVAYNLLEGHTELAPLW, and ELRKLYLEGNPLWFHPAHRAAT. Residues 333–366 are disordered; it reads DSSGLGPVIQPLSWPVGSTTETSGGPELSDSLSS. A phosphoserine mark is found at S388, S390, and S393. Residues 441-454 show a composition bias toward polar residues; the sequence is MGSSPLSTTKTPAL. 2 disordered regions span residues 441-522 and 741-762; these read MGSS…EQKA and RPDGIPPQTSISHDRSSWSLSP. Basic and acidic residues-rich tracts occupy residues 478–492 and 501–510; these read KESPEKVSEEGRVEP and EQDKEEGSRE. 3 positions are modified to phosphoserine: S757, S761, and S763. The interval 967-993 is disordered; it reads HAESPLPVVSDETSEQPASLGPGPSLQ.

The protein belongs to the STK11IP family. As to quaternary structure, found in a ternary complex composed of STK11/LKB1, STK11IP and SMAD4. Interacts with SMAD4. Interacts with STK11/LKB1.

It is found in the cytoplasm. Functionally, may regulate STK11/LKB1 function by controlling its subcellular localization. The protein is Serine/threonine-protein kinase 11-interacting protein (Stk11ip) of Mus musculus (Mouse).